A 354-amino-acid polypeptide reads, in one-letter code: Photosystem II protein D1 (354 aa).

The residue at position 2 (threonine 2) is an N-acetylthreonine. Phosphothreonine is present on threonine 2. 3 helical membrane passes run 29–46 (YIGW…TATS), 118–133 (HFLL…EWEL), and 142–156 (WIAV…AATA). Position 118 (histidine 118) interacts with chlorophyll a. Tyrosine 126 serves as a coordination point for pheophytin a. 2 residues coordinate [CaMn4O5] cluster: aspartate 170 and glutamate 189. A helical membrane pass occupies residues 197 to 218 (FHMLGVAGVFGGSLFSAMHGSL). Histidine 198 provides a ligand contact to chlorophyll a. Residues histidine 215 and 264-265 (SF) each bind a quinone. Histidine 215 provides a ligand contact to Fe cation. A Fe cation-binding site is contributed by histidine 272. The helical transmembrane segment at 274–288 (FLAAWPVVGIWFTAL) threads the bilayer. Histidine 332, glutamate 333, aspartate 342, and alanine 344 together coordinate [CaMn4O5] cluster. A propeptide spanning residues 345–354 (ASIEAPSLNG) is cleaved from the precursor.

Belongs to the reaction center PufL/M/PsbA/D family. In terms of assembly, PSII is composed of 1 copy each of membrane proteins PsbA, PsbB, PsbC, PsbD, PsbE, PsbF, PsbH, PsbI, PsbJ, PsbK, PsbL, PsbM, PsbT, PsbX, PsbY, PsbZ, Psb30/Ycf12, at least 3 peripheral proteins of the oxygen-evolving complex and a large number of cofactors. It forms dimeric complexes. It depends on The D1/D2 heterodimer binds P680, chlorophylls that are the primary electron donor of PSII, and subsequent electron acceptors. It shares a non-heme iron and each subunit binds pheophytin, quinone, additional chlorophylls, carotenoids and lipids. D1 provides most of the ligands for the Mn4-Ca-O5 cluster of the oxygen-evolving complex (OEC). There is also a Cl(-1) ion associated with D1 and D2, which is required for oxygen evolution. The PSII complex binds additional chlorophylls, carotenoids and specific lipids. as a cofactor. Post-translationally, tyr-161 forms a radical intermediate that is referred to as redox-active TyrZ, YZ or Y-Z. In terms of processing, C-terminally processed by CTPA; processing is essential to allow assembly of the oxygen-evolving complex and thus photosynthetic growth.

It localises to the plastid. The protein localises to the chloroplast thylakoid membrane. The enzyme catalyses 2 a plastoquinone + 4 hnu + 2 H2O = 2 a plastoquinol + O2. Photosystem II (PSII) is a light-driven water:plastoquinone oxidoreductase that uses light energy to abstract electrons from H(2)O, generating O(2) and a proton gradient subsequently used for ATP formation. It consists of a core antenna complex that captures photons, and an electron transfer chain that converts photonic excitation into a charge separation. The D1/D2 (PsbA/PsbD) reaction center heterodimer binds P680, the primary electron donor of PSII as well as several subsequent electron acceptors. The sequence is that of Photosystem II protein D1 from Selaginella uncinata (Blue spike-moss).